Consider the following 646-residue polypeptide: Anoctamin-10 (646 aa).

8 consecutive transmembrane segments (helical) span residues 210 to 230 (LYFG…LIGI), 241 to 261 (DKYV…LEVW), 314 to 334 (IYLV…YVMM), 357 to 377 (VLLF…NLLY), 404 to 424 (VLVF…FVMQ), 502 to 522 (FLLF…AVLV), 557 to 577 (LAFE…IALS), and 592 to 612 (ILTV…LAFV).

It belongs to the anoctamin family.

It is found in the membrane. In terms of biological role, does not exhibit calcium-activated chloride channel (CaCC) activity. Can inhibit the activity of ANO1. This chain is Anoctamin-10 (ano10), found in Danio rerio (Zebrafish).